Reading from the N-terminus, the 110-residue chain is Large ribosomal subunit protein uL22 (110 aa).

Belongs to the universal ribosomal protein uL22 family. Part of the 50S ribosomal subunit.

Its function is as follows. This protein binds specifically to 23S rRNA; its binding is stimulated by other ribosomal proteins, e.g. L4, L17, and L20. It is important during the early stages of 50S assembly. It makes multiple contacts with different domains of the 23S rRNA in the assembled 50S subunit and ribosome. The globular domain of the protein is located near the polypeptide exit tunnel on the outside of the subunit, while an extended beta-hairpin is found that lines the wall of the exit tunnel in the center of the 70S ribosome. This Stutzerimonas stutzeri (strain A1501) (Pseudomonas stutzeri) protein is Large ribosomal subunit protein uL22.